Consider the following 194-residue polypeptide: Peptidyl-tRNA hydrolase (194 aa).

Y16 serves as a coordination point for tRNA. Catalysis depends on H21, which acts as the Proton acceptor. The tRNA site is built by F67, N69, and N115.

This sequence belongs to the PTH family. Monomer.

It is found in the cytoplasm. The enzyme catalyses an N-acyl-L-alpha-aminoacyl-tRNA + H2O = an N-acyl-L-amino acid + a tRNA + H(+). In terms of biological role, hydrolyzes ribosome-free peptidyl-tRNAs (with 1 or more amino acids incorporated), which drop off the ribosome during protein synthesis, or as a result of ribosome stalling. Functionally, catalyzes the release of premature peptidyl moieties from peptidyl-tRNA molecules trapped in stalled 50S ribosomal subunits, and thus maintains levels of free tRNAs and 50S ribosomes. This is Peptidyl-tRNA hydrolase from Klebsiella pneumoniae (strain 342).